Consider the following 462-residue polypeptide: Argininosuccinate lyase (462 aa).

This sequence belongs to the lyase 1 family. Argininosuccinate lyase subfamily.

The protein resides in the cytoplasm. The catalysed reaction is 2-(N(omega)-L-arginino)succinate = fumarate + L-arginine. It participates in amino-acid biosynthesis; L-arginine biosynthesis; L-arginine from L-ornithine and carbamoyl phosphate: step 3/3. This Dechloromonas aromatica (strain RCB) protein is Argininosuccinate lyase.